Consider the following 77-residue polypeptide: uncharacterized protein (77 aa).

This is an uncharacterized protein from Vaccinia virus (strain Copenhagen) (VACV).